The sequence spans 289 residues: uncharacterized protein (289 aa).

Residue Glu-48 is part of the active site.

Belongs to the PhzF family.

This is an uncharacterized protein from Pasteurella multocida (strain Pm70).